The sequence spans 363 residues: Aminomethyltransferase (363 aa).

The protein belongs to the GcvT family. In terms of assembly, the glycine cleavage system is composed of four proteins: P, T, L and H.

It catalyses the reaction N(6)-[(R)-S(8)-aminomethyldihydrolipoyl]-L-lysyl-[protein] + (6S)-5,6,7,8-tetrahydrofolate = N(6)-[(R)-dihydrolipoyl]-L-lysyl-[protein] + (6R)-5,10-methylene-5,6,7,8-tetrahydrofolate + NH4(+). Its function is as follows. The glycine cleavage system catalyzes the degradation of glycine. This is Aminomethyltransferase from Dechloromonas aromatica (strain RCB).